The sequence spans 394 residues: Enoyl-CoA delta isomerase 2 (394 aa).

A mitochondrion-targeting transit peptide spans 1–38 (MAMAYLAWRLARRSCPSSLQVTSFPVVQLHMNRTAMRA). An ACB domain is found at 39 to 124 (SQKDFENSMN…VSSLSPSLES (86 aa)). K51 carries the N6-acetyllysine; alternate modification. K51 bears the N6-succinyllysine; alternate mark. K55 carries the N6-succinyllysine modification. K62 is modified (N6-acetyllysine; alternate). An N6-succinyllysine; alternate modification is found at K62. 66–70 (YALYK) serves as a coordination point for an acyl-CoA. N6-succinyllysine occurs at positions 70, 81, and 90. K92 is subject to N6-acetyllysine; alternate. The residue at position 92 (K92) is an N6-succinyllysine; alternate. Residue K92 participates in an acyl-CoA binding. Phosphoserine is present on S101. Y111 contributes to the an acyl-CoA binding site. S119 is subject to Phosphoserine. The interval 151–322 (TKIMFNRPKK…AQGLVTEVFP (172 aa)) is ECH-like. Position 161 is an N6-succinyllysine (K161). 198–202 (SGNDL) lines the substrate pocket. K289 bears the N6-succinyllysine mark. The Microbody targeting signal signature appears at 392–394 (SKL).

This sequence in the C-terminal section; belongs to the enoyl-CoA hydratase/isomerase family. In terms of tissue distribution, abundant in heart, skeletal muscle and liver. Expressed in CD34(+) T-cells and CD34(+) bone marrow cells.

The protein localises to the mitochondrion. It is found in the peroxisome matrix. The enzyme catalyses a (3Z)-enoyl-CoA = a 4-saturated (2E)-enoyl-CoA. The catalysed reaction is (3Z)-octenoyl-CoA = (2E)-octenoyl-CoA. It carries out the reaction a (3E)-enoyl-CoA = a 4-saturated (2E)-enoyl-CoA. It catalyses the reaction (2E)-tetradecenoyl-CoA = (3Z)-tetradecenoyl-CoA. The enzyme catalyses (3E)-tetradecenoyl-CoA = (2E)-tetradecenoyl-CoA. The catalysed reaction is (3E)-octenoyl-CoA = (2E)-octenoyl-CoA. It carries out the reaction (3E)-nonenoyl-CoA = (2E)-nonenoyl-CoA. It participates in lipid metabolism; fatty acid beta-oxidation. Functionally, able to isomerize both 3-cis and 3-trans double bonds into the 2-trans form in a range of enoyl-CoA species. Has a preference for 3-trans substrates. The chain is Enoyl-CoA delta isomerase 2 (ECI2) from Homo sapiens (Human).